Consider the following 353-residue polypeptide: Guanidino acid hydrolase, mitochondrial (353 aa).

The N-terminal 33 residues, Met-1–Gln-33, are a transit peptide targeting the mitochondrion. Positions Pro-29 to Val-52 are disordered. Residues His-163 and His-188 each contribute to the Mn(2+) site. Lys-194 is modified (N6-acetyllysine). Lys-218 is subject to N6-acetyllysine; alternate. Residue Lys-218 is modified to N6-succinyllysine; alternate. Residue Asp-279 participates in Mn(2+) binding.

Belongs to the arginase family. Agmatinase subfamily. Mn(2+) is required as a cofactor.

It localises to the mitochondrion. It catalyses the reaction 3-guanidinopropanoate + H2O = urea + beta-alanine. The catalysed reaction is 4-guanidinobutanoate + H2O = urea + 4-aminobutanoate. It carries out the reaction taurocyamine + H2O = urea + taurine. The enzyme catalyses L-arginine + H2O = urea + L-ornithine. The protein operates within nitrogen metabolism; urea cycle; L-ornithine and urea from L-arginine: step 1/1. In terms of biological role, hydrolyzes linear guanidino acids to form urea and the corresponding amines. Displays specificity for substrates having a negatively charged head group and short chains including taurocyamine, guanidino propanoic and butanoic acids. May protect cells by detoxifying potentially harmful amounts of guanidino acids. Metabolizes L-arginine with low efficiency. The protein is Guanidino acid hydrolase, mitochondrial (Agmat) of Rattus norvegicus (Rat).